Here is a 932-residue protein sequence, read N- to C-terminus: DNA mismatch repair protein MutS (932 aa).

615–622 (GPNMAGKS) contacts ATP.

The protein belongs to the DNA mismatch repair MutS family.

Its function is as follows. This protein is involved in the repair of mismatches in DNA. It is possible that it carries out the mismatch recognition step. This protein has a weak ATPase activity. This is DNA mismatch repair protein MutS from Clostridium botulinum (strain Langeland / NCTC 10281 / Type F).